Here is a 1239-residue protein sequence, read N- to C-terminus: Inner tegument protein (1239 aa).

Disordered stretches follow at residues 1-20 (MASA…DAQP), 669-704 (GESP…GGGP), 959-980 (RPPP…DTPP), and 1087-1239 (GRNA…AEDE). Residues 615-1239 (NELPKTRSLA…RPPRPTAEDE (625 aa)) are interaction with large tegument protein. Residues 1112–1123 (DSSPFSFSSSDF) show a composition bias toward low complexity. Over residues 1139–1148 (VPGGGGGGEG) the composition is skewed to gly residues. A compositionally biased stretch (basic and acidic residues) spans 1151–1170 (EEERERPSDIDTAARARKVE). Low complexity predominate over residues 1180-1189 (RTTPSPSRRA). Positions 1219 to 1232 (VRPRTRRGATRRPP) are enriched in basic residues.

It belongs to the herpesviridae inner tegument protein family. In terms of assembly, interacts (via C-terminus) with the large tegument protein/LTP (via N-terminus).

It localises to the virion tegument. The protein localises to the host cytoplasm. It is found in the host nucleus. Its subcellular location is the host Golgi apparatus. The protein resides in the host trans-Golgi network. Plays an essential role in cytoplasmic secondary envelopment during viral egress. Interacts with the capsid via the large tegument protein/LTP and participates in its transport to the host trans-Golgi network (TGN) where secondary envelopment occurs. Modulates tegumentation and capsid accumulation at the viral assembly complex. The polypeptide is Inner tegument protein (Homo sapiens (Human)).